The sequence spans 384 residues: Cytochrome b (384 aa).

A run of 4 helical transmembrane segments spans residues 32 to 52 (FGSL…FLSM), 75 to 96 (FLLR…YFHI), 111 to 131 (WRVG…GYVL), and 176 to 196 (FFSL…VHLI). Heme b-binding residues include His-81 and His-95. Positions 180 and 194 each coordinate heme b. Residue His-199 participates in a ubiquinone binding. 4 helical membrane passes run 224 to 244 (SKDW…VYLM), 286 to 306 (FGGV…PLLH), 318 to 338 (FGRM…WIGS), and 345 to 366 (FIII…LIPL).

This sequence belongs to the cytochrome b family. As to quaternary structure, the main subunits of complex b-c1 are: cytochrome b, cytochrome c1 and the Rieske protein. It depends on heme b as a cofactor.

It is found in the mitochondrion inner membrane. Functionally, component of the ubiquinol-cytochrome c reductase complex (complex III or cytochrome b-c1 complex) that is part of the mitochondrial respiratory chain. The b-c1 complex mediates electron transfer from ubiquinol to cytochrome c. Contributes to the generation of a proton gradient across the mitochondrial membrane that is then used for ATP synthesis. The chain is Cytochrome b (MT-CYB) from Acropora tenuis (Purple tipped acropora).